We begin with the raw amino-acid sequence, 519 residues long: Putative tyrosine carboxypeptidase MATCAP2 (519 aa).

Residues 63-103 (SKEEKKHRSQKRFSSASSKQHRKPSKSPSSSHSKDPSRMTA) form a disordered region. Histidine 330 is a binding site for Zn(2+). Glutamate 331 acts as the Nucleophile in catalysis. Histidine 335 and glutamate 366 together coordinate Zn(2+).

Zn(2+) serves as cofactor.

Functionally, putative tyrosine carboxypeptidase. In Mus musculus (Mouse), this protein is Putative tyrosine carboxypeptidase MATCAP2.